Reading from the N-terminus, the 167-residue chain is Male-specific protein scotti (167 aa).

Residues Asn-30, Asn-124, and Asn-148 are each glycosylated (N-linked (GlcNAc...) asparagine).

The protein belongs to the male-specific scotti family.

Post-meiotically transcribed gene that has a role in late spermiogenesis; required for actin cone progression during spermatid individualization. The protein is Male-specific protein scotti of Drosophila ananassae (Fruit fly).